The chain runs to 318 residues: Aspartate carbamoyltransferase catalytic subunit (318 aa).

Arg-58 and Thr-59 together coordinate carbamoyl phosphate. Residue Lys-86 participates in L-aspartate binding. Carbamoyl phosphate contacts are provided by Arg-108, His-141, and Gln-144. Positions 174 and 226 each coordinate L-aspartate. Residues Gly-270 and Pro-271 each coordinate carbamoyl phosphate.

The protein belongs to the aspartate/ornithine carbamoyltransferase superfamily. ATCase family. Heterododecamer (2C3:3R2) of six catalytic PyrB chains organized as two trimers (C3), and six regulatory PyrI chains organized as three dimers (R2).

The catalysed reaction is carbamoyl phosphate + L-aspartate = N-carbamoyl-L-aspartate + phosphate + H(+). It participates in pyrimidine metabolism; UMP biosynthesis via de novo pathway; (S)-dihydroorotate from bicarbonate: step 2/3. Catalyzes the condensation of carbamoyl phosphate and aspartate to form carbamoyl aspartate and inorganic phosphate, the committed step in the de novo pyrimidine nucleotide biosynthesis pathway. The polypeptide is Aspartate carbamoyltransferase catalytic subunit (Lactobacillus delbrueckii subsp. bulgaricus (strain ATCC BAA-365 / Lb-18)).